We begin with the raw amino-acid sequence, 227 residues long: ATP-dependent Clp protease proteolytic subunit (227 aa).

Residue serine 120 is the Nucleophile of the active site. The active site involves histidine 145.

The protein belongs to the peptidase S14 family. As to quaternary structure, fourteen ClpP subunits assemble into 2 heptameric rings which stack back to back to give a disk-like structure with a central cavity, resembling the structure of eukaryotic proteasomes.

The protein resides in the cytoplasm. It catalyses the reaction Hydrolysis of proteins to small peptides in the presence of ATP and magnesium. alpha-casein is the usual test substrate. In the absence of ATP, only oligopeptides shorter than five residues are hydrolyzed (such as succinyl-Leu-Tyr-|-NHMec, and Leu-Tyr-Leu-|-Tyr-Trp, in which cleavage of the -Tyr-|-Leu- and -Tyr-|-Trp bonds also occurs).. Cleaves peptides in various proteins in a process that requires ATP hydrolysis. Has a chymotrypsin-like activity. Plays a major role in the degradation of misfolded proteins. This chain is ATP-dependent Clp protease proteolytic subunit, found in Rickettsia bellii (strain RML369-C).